The following is a 350-amino-acid chain: MSVVEYLKKLSKLHGISGREDSVREFMKKELEKYCDSVEIDNFGNLIAKRGNKGKKIMIAAHMDEIGLMVKYIDDNGFLKFTKIGGIYDPTILNQKVVVHGSKGDLIGVLGSKPPHRMKEEEKTKIIKYEDMFIDIGAESREEAIEMGVNIGTWVSFLSEVYDLGKNRLTGKAFDDRVGCAVLLEVMKRLSEEDIDCQVYAVGTVQEEVGLKGARVSAFKINPDVAIALDVTIAGDHPGIKKEDAPVDLGKGPVVGIVDASGRGLIAHPKVLDMIKAVSEKYKIDVQWEVGEGGTTDATAIHLTREGIPTGVISVPARYIHTPVEVIDKRDLEKTVELVYNCIKEVNNFF.

The a divalent metal cation site is built by H62 and D175. E207 (proton acceptor) is an active-site residue. A divalent metal cation-binding residues include E208, D230, and H321.

This sequence belongs to the peptidase M42 family. It depends on a divalent metal cation as a cofactor.

The chain is Putative aminopeptidase MJ0555 from Methanocaldococcus jannaschii (strain ATCC 43067 / DSM 2661 / JAL-1 / JCM 10045 / NBRC 100440) (Methanococcus jannaschii).